Here is a 349-residue protein sequence, read N- to C-terminus: Protein AMBP (349 aa).

A signal peptide spans Met-1–Ala-19. Asn-35 carries an N-linked (GlcNAc...) asparagine glycan. Positions 52 and 110 each coordinate 3-hydroxy-L-kynurenine. An intrachain disulfide couples Cys-90 to Cys-187. Asn-114 is a glycosylation site (N-linked (GlcNAc...) asparagine). 3-hydroxy-L-kynurenine contacts are provided by Lys-136 and Lys-148. Ser-214 carries O-linked (Xyl...) (chondroitin sulfate) serine glycosylation. 6 disulfide bridges follow: Cys-230–Cys-280, Cys-239–Cys-263, Cys-255–Cys-276, Cys-286–Cys-336, Cys-295–Cys-319, and Cys-311–Cys-332. 2 BPTI/Kunitz inhibitor domains span residues Cys-230–Cys-280 and Cys-286–Cys-336.

The protein in the N-terminal section; belongs to the calycin superfamily. Lipocalin family. In terms of assembly, monomer. Homodimer. In plasma, it occurs as a monomer or dimer and in covalently-linked complexes with immunoglobulin A (IgA), ALB/albumin and F2/prothrombin. Chromophore-bound alpha-1-microglobulin interacts with the constant region of immunoglobulin A. Chromophore-bound alpha-1-microglobulin interacts with ALB with molar ratio 2:1 and 1:1; this interaction does not prevent fatty acid binding to ALB. Interacts with F2/prothrombin (via N-terminus) with molar ratio 2:1 and 1:1; this interaction does not prevent the activation of prothrombin to thrombin. Interacts with NDUFAB1, a subunit of mitochondrial complex I. Interacts with FN1. I-alpha-I plasma protease inhibitors are assembled from one or two heavy chains (HC) and one light chain, bikunin. Inter-alpha-inhibitor (I-alpha-I) is composed of ITIH1/HC1, ITIH2/HC2 and bikunin, and pre-alpha-inhibitor (P-alpha-I) of ITIH3/HC3 and bikunin. Interacts with TNFAIP6 (via Link domain). As to quaternary structure, monomer. Also occurs as a complex with tryptase in mast cells. The precursor is proteolytically processed into separately functioning proteins. Post-translationally, 3-hydroxykynurenine, an oxidized tryptophan metabolite that is common in biological fluids, reacts with Cys-53, Lys-111, Lys-137, and Lys-149 to form heterogeneous polycyclic chromophores including hydroxanthommatin. The reaction by alpha-1-microglobulin is autocatalytic; the human protein forms chromophore even when expressed in insect and bacterial cells. The chromophore can react with accessible cysteines forming non-reducible thioether cross-links with other molecules of alpha-1-microglobulin or with other proteins such as Ig alpha-1 chain C region 'Cys-352'. In terms of processing, heavy chains are interlinked with bikunin via a chondroitin 4-sulfate bridge to the C-terminal aspartate. Proteolytically cleaved by PRSS3 at Kunitz domain 2. In terms of tissue distribution, expressed by the liver and secreted in plasma.

The protein resides in the secreted. The protein localises to the endoplasmic reticulum. It localises to the cytoplasm. It is found in the cytosol. Its subcellular location is the cell membrane. The protein resides in the nucleus membrane. The protein localises to the mitochondrion inner membrane. It localises to the extracellular space. It is found in the extracellular matrix. Antioxidant and tissue repair protein with reductase, heme-binding and radical-scavenging activities. Removes and protects against harmful oxidants and repairs macromolecules in intravascular and extravascular spaces and in intracellular compartments. Intravascularly, plays a regulatory role in red cell homeostasis by preventing heme- and reactive oxygen species-induced cell damage. Binds and degrades free heme to protect fetal and adult red blood cells from hemolysis. Reduces extracellular methemoglobin, a Fe3+ (ferric) form of hemoglobin that cannot bind oxygen, back to the Fe2+ (ferrous) form deoxyhemoglobin, which has oxygen-carrying potential. Upon acute inflammation, inhibits oxidation of low-density lipoprotein particles by MPO and limits vascular damage. Extravascularly, protects from oxidation products formed on extracellular matrix structures and cell membranes. Catalyzes the reduction of carbonyl groups on oxidized collagen fibers and preserves cellular and extracellular matrix ultrastructures. Importantly, counteracts the oxidative damage at blood-placenta interface, preventing leakage of free fetal hemoglobin into the maternal circulation. Intracellularly, has a role in maintaining mitochondrial redox homeostasis. Bound to complex I of the respiratory chain of mitochondria, may scavenge free radicals and preserve mitochondrial ATP synthesis. Protects renal tubule epithelial cells from heme-induced oxidative damage to mitochondria. Reduces cytochrome c from Fe3+ (ferric) to the Fe2+ (ferrous) state through formation of superoxide anion radicals in the presence of ascorbate or NADH/NADPH electron donor cofactors, ascorbate being the preferred cofactor. Has a chaperone role in facilitating the correct folding of bikunin in the endoplasmic reticulum compartment. In terms of biological role, kunitz-type serine protease inhibitor and structural component of extracellular matrix with a role in extracellular space remodeling and cell adhesion. Among others, has antiprotease activity toward kallikrein, a protease involved in airway inflammation; inhibits GZMK/granzyme, a granule-stored serine protease involved in NK and T cell cytotoxic responses; and inhibits PLG/plasmin, a protease required for activation of matrix metalloproteinases. As part of I-alpha-I complex, provides for the heavy chains to be transferred from I-alpha-I complex to hyaluronan in the presence of TNFAIP6, in a dynamic process that releases free bikunin and remodels extracellular matrix proteoglycan structures. Free bikunin, but not its heavy chain-bound form, acts as a potent protease inhibitor in airway secretions. Part of hyaluronan-rich extracellular matrix that surrounds oocyte during cumulus oophorus expansion, an indispensable process for proper ovulation. Also inhibits calcium oxalate crystallization. Functionally, kunitz-type serine protease inhibitor. Has high catalytic efficiency for F10/blood coagulation factor Xa and may act as an anticoagulant by inhibiting prothrombin activation. Inhibits trypsin and mast cell CMA1/chymase and tryptase proteases. This chain is Protein AMBP (AMBP), found in Mesocricetus auratus (Golden hamster).